We begin with the raw amino-acid sequence, 96 residues long: Small ribosomal subunit protein bS16 (96 aa).

It belongs to the bacterial ribosomal protein bS16 family.

This Anaplasma phagocytophilum (strain HZ) protein is Small ribosomal subunit protein bS16.